The primary structure comprises 528 residues: MCQAGEDYAGPAQREPPPVPRPSREQKCVKCAEGLPVVVIRAGDAFCRDCFKAFYVHKFRAMLGKNRVIFPGEKVLLSWSGGPSSSSMVWQVLEGLSQDSAKRLRFVPGVIYVDEGAACGQSLEDRVKTLAEVKRILGNTGFPFHVVALEEVFSLPPSVLRRASQEPAGTEEAYKAAVDSFLQQQHVLGTEACASPAQGQGQLRPSHSQEPSGTVGHPKDAQTEALSRLFKSIKTLTAKEELLQTLRTHLTVHVARSHGYRKVMTGESCTRLAIKLMTNLAMGRGAFLAWDTGFSDERHGDVVLVRPMRDHTLKEVAFYNRLFGVPSVFTPAIDTKAPEKASIHRLMEAFILKLQTLFPSTVSTVYRTSEKLVKAPREGCATGPSGPNCLLCMCALDVDNADSATAFGAQSSSHLSQMLTAEAGTPTRPCCGAGEGQTQSCHRAVGRREDAWACIIEQLCYSCRVNMKDLPSLDPLPPYVLTEAQLRSQRGSVSEEIQEYLIEEEEEEDRAEPCEAMKQEAEDKGIGL.

Disordered regions lie at residues 1–23 (MCQA…PRPS) and 196–219 (PAQG…GHPK). C2 is subject to N-acetylcysteine. The segment covering 197–212 (AQGQGQLRPSHSQEPS) has biased composition (polar residues). S416 bears the Phosphoserine mark. Residues 504–528 (EEEEEDRAEPCEAMKQEAEDKGIGL) are disordered. Positions 511 to 528 (AEPCEAMKQEAEDKGIGL) are enriched in basic and acidic residues.

The protein belongs to the CTU2/NCS2 family. As to quaternary structure, component of a complex at least composed of URM1, CTU2/NCS2 and CTU1/ATPBD3.

Its subcellular location is the cytoplasm. It functions in the pathway tRNA modification; 5-methoxycarbonylmethyl-2-thiouridine-tRNA biosynthesis. Plays a central role in 2-thiolation of mcm(5)S(2)U at tRNA wobble positions of tRNA(Lys), tRNA(Glu) and tRNA(Gln). May act by forming a heterodimer with CTU1/ATPBD3 that ligates sulfur from thiocarboxylated URM1 onto the uridine of tRNAs at wobble position. The protein is Cytoplasmic tRNA 2-thiolation protein 2 (Ctu2) of Rattus norvegicus (Rat).